The primary structure comprises 280 residues: Shikimate dehydrogenase (NADP(+)) (280 aa).

Residues 23–25 (SLS) and Thr-70 each bind shikimate. Lys-74 (proton acceptor) is an active-site residue. Shikimate contacts are provided by Asn-95 and Asp-111. Residues 135–139 (GSGGA), 158–163 (NRTISK), and Ile-221 each bind NADP(+). Residue Tyr-223 coordinates shikimate. Gly-247 provides a ligand contact to NADP(+).

The protein belongs to the shikimate dehydrogenase family. In terms of assembly, homodimer.

It carries out the reaction shikimate + NADP(+) = 3-dehydroshikimate + NADPH + H(+). The protein operates within metabolic intermediate biosynthesis; chorismate biosynthesis; chorismate from D-erythrose 4-phosphate and phosphoenolpyruvate: step 4/7. Involved in the biosynthesis of the chorismate, which leads to the biosynthesis of aromatic amino acids. Catalyzes the reversible NADPH linked reduction of 3-dehydroshikimate (DHSA) to yield shikimate (SA). The polypeptide is Shikimate dehydrogenase (NADP(+)) (Buchnera aphidicola subsp. Cinara cedri (strain Cc)).